Here is a 145-residue protein sequence, read N- to C-terminus: Large ribosomal subunit protein uL15 (145 aa).

A disordered region spans residues 1 to 52; it reads MKLNTIAPAEGSKKDRRRVGRGIGSGFGKTAGRGHKGQHARSGGYHKVGFEG. The span at 21–31 shows a compositional bias: gly residues; sequence RGIGSGFGKTA.

The protein belongs to the universal ribosomal protein uL15 family. As to quaternary structure, part of the 50S ribosomal subunit.

In terms of biological role, binds to the 23S rRNA. In Acidithiobacillus ferrooxidans (strain ATCC 53993 / BNL-5-31) (Leptospirillum ferrooxidans (ATCC 53993)), this protein is Large ribosomal subunit protein uL15.